The chain runs to 386 residues: 8-amino-7-oxononanoate synthase (386 aa).

Arginine 31 is a substrate binding site. 109–110 (GY) provides a ligand contact to pyridoxal 5'-phosphate. Histidine 134 serves as a coordination point for substrate. Residues serine 180, 205–208 (DEAH), and 236–239 (TLSK) each bind pyridoxal 5'-phosphate. Lysine 239 carries the post-translational modification N6-(pyridoxal phosphate)lysine. Threonine 349 provides a ligand contact to substrate.

This sequence belongs to the class-II pyridoxal-phosphate-dependent aminotransferase family. BioF subfamily. In terms of assembly, homodimer. Pyridoxal 5'-phosphate is required as a cofactor.

It carries out the reaction 6-carboxyhexanoyl-[ACP] + L-alanine + H(+) = (8S)-8-amino-7-oxononanoate + holo-[ACP] + CO2. It participates in cofactor biosynthesis; biotin biosynthesis. Catalyzes the decarboxylative condensation of pimeloyl-[acyl-carrier protein] and L-alanine to produce 8-amino-7-oxononanoate (AON), [acyl-carrier protein], and carbon dioxide. The protein is 8-amino-7-oxononanoate synthase of Mycobacterium bovis (strain ATCC BAA-935 / AF2122/97).